The following is a 387-amino-acid chain: Homoserine O-succinyltransferase (387 aa).

The 310-residue stretch at 49–358 folds into the AB hydrolase-1 domain; that stretch reads NAILICHALS…DAEQGHDSFL (310 aa). The active-site Nucleophile is Ser-156. Arg-226 contacts substrate. Active-site residues include Asp-321 and His-354. Position 355 (Asp-355) interacts with substrate.

The protein belongs to the AB hydrolase superfamily. MetX family. Homodimer.

Its subcellular location is the cytoplasm. The catalysed reaction is L-homoserine + succinyl-CoA = O-succinyl-L-homoserine + CoA. Its pathway is amino-acid biosynthesis; L-methionine biosynthesis via de novo pathway; O-succinyl-L-homoserine from L-homoserine: step 1/1. Requires MetW for activity. In terms of biological role, transfers a succinyl group from succinyl-CoA to L-homoserine, forming succinyl-L-homoserine. The protein is Homoserine O-succinyltransferase of Acinetobacter baylyi (strain ATCC 33305 / BD413 / ADP1).